Here is a 93-residue protein sequence, read N- to C-terminus: Small ribosomal subunit protein uS19 (93 aa).

The protein belongs to the universal ribosomal protein uS19 family.

In terms of biological role, protein S19 forms a complex with S13 that binds strongly to the 16S ribosomal RNA. The chain is Small ribosomal subunit protein uS19 from Nautilia profundicola (strain ATCC BAA-1463 / DSM 18972 / AmH).